A 484-amino-acid polypeptide reads, in one-letter code: Glucan endo-1,3-beta-glucosidase 5 (484 aa).

The first 26 residues, 1–26, serve as a signal peptide directing secretion; the sequence is MLFKGVFAVFFVITLLYASLLIEVEG. A glycan (N-linked (GlcNAc...) asparagine) is linked at Asn102. The active-site Proton donor is Glu122. Residues Asn129 and Asn260 are each glycosylated (N-linked (GlcNAc...) asparagine). The active-site Nucleophile is Glu267. Cys366 and Cys428 form a disulfide bridge. Asn409 carries N-linked (GlcNAc...) asparagine glycosylation. Ala460 is lipidated: GPI-anchor amidated alanine. Residues 461–484 constitute a propeptide, removed in mature form; that stretch reads SAMMPITRSTAVLLLLSICLYIVL.

It belongs to the glycosyl hydrolase 17 family. Post-translationally, contains two additional disulfide bonds.

The protein localises to the cell membrane. It carries out the reaction Hydrolysis of (1-&gt;3)-beta-D-glucosidic linkages in (1-&gt;3)-beta-D-glucans.. This is Glucan endo-1,3-beta-glucosidase 5 from Arabidopsis thaliana (Mouse-ear cress).